A 365-amino-acid polypeptide reads, in one-letter code: H-2 class I histocompatibility antigen, D-D alpha chain (365 aa).

The N-terminal stretch at 1 to 24 (MGAMAPRTLLLLLAAALGPTQTRA) is a signal peptide. Positions 25–114 (GSHSLRYFVT…ALRYYNQSAG (90 aa)) are alpha-1. Residues 25 to 311 (GSHSLRYFVT…EPPSSTKTNT (287 aa)) are Extracellular-facing. The N-linked (GlcNAc...) asparagine glycan is linked to asparagine 110. An alpha-2 region spans residues 115–206 (GSHTLQWMAG…KNGNATLLRT (92 aa)). A disulfide bond links cysteine 125 and cysteine 188. Asparagine 200 carries an N-linked (GlcNAc...) asparagine glycan. Residues 207–298 (DPPKAHVTHH…GLPEPLTLRW (92 aa)) form an alpha-3 region. The Ig-like C1-type domain maps to 209–297 (PKAHVTHHRR…EGLPEPLTLR (89 aa)). Cysteine 227 and cysteine 283 form a disulfide bridge. A connecting peptide region spans residues 299-311 (GKEEPPSSTKTNT). The chain crosses the membrane as a helical span at residues 312-334 (VIIAVPVVLGAVVILGAVMAFVM). The Cytoplasmic segment spans residues 335–365 (KRRRNTGGKGGDYALAPGSQSSDMSLPDCKV). The interval 343-365 (KGGDYALAPGSQSSDMSLPDCKV) is disordered. Residues serine 356 and serine 359 each carry the phosphoserine modification.

It belongs to the MHC class I family. Heterodimer of an alpha chain and a beta chain (beta-2-microglobulin).

The protein localises to the membrane. Functionally, involved in the presentation of foreign antigens to the immune system. The polypeptide is H-2 class I histocompatibility antigen, D-D alpha chain (H2-D1) (Mus musculus (Mouse)).